The following is a 286-amino-acid chain: Thymidylate synthase (286 aa).

140–141 contacts dUMP; sequence RR. Cysteine 161 (nucleophile) is an active-site residue. Residues 185–188, asparagine 196, and 226–228 contribute to the dUMP site; these read RSND and HIY. Residue aspartate 188 coordinates (6R)-5,10-methylene-5,6,7,8-tetrahydrofolate. Alanine 285 lines the (6R)-5,10-methylene-5,6,7,8-tetrahydrofolate pocket.

It belongs to the thymidylate synthase family. Bacterial-type ThyA subfamily. As to quaternary structure, homodimer.

The protein resides in the cytoplasm. It catalyses the reaction dUMP + (6R)-5,10-methylene-5,6,7,8-tetrahydrofolate = 7,8-dihydrofolate + dTMP. The protein operates within pyrimidine metabolism; dTTP biosynthesis. Its function is as follows. Catalyzes the reductive methylation of 2'-deoxyuridine-5'-monophosphate (dUMP) to 2'-deoxythymidine-5'-monophosphate (dTMP) while utilizing 5,10-methylenetetrahydrofolate (mTHF) as the methyl donor and reductant in the reaction, yielding dihydrofolate (DHF) as a by-product. This enzymatic reaction provides an intracellular de novo source of dTMP, an essential precursor for DNA biosynthesis. The polypeptide is Thymidylate synthase (Streptococcus thermophilus (strain ATCC BAA-491 / LMD-9)).